Consider the following 72-residue polypeptide: Bowman-Birk type trypsin inhibitor (72 aa).

7 disulfides stabilise this stretch: Cys-12/Cys-66, Cys-13/Cys-28, Cys-16/Cys-62, Cys-18/Cys-26, Cys-36/Cys-43, Cys-40/Cys-55, and Cys-45/Cys-53.

This sequence belongs to the Bowman-Birk serine protease inhibitor family.

This Vigna radiata var. radiata (Mung bean) protein is Bowman-Birk type trypsin inhibitor.